A 479-amino-acid chain; its full sequence is tRNA-2-methylthio-N(6)-dimethylallyladenosine synthase (479 aa).

Positions 6-122 constitute an MTTase N-terminal domain; sequence KTVYIKTVGC…IPDMLTKVTS (117 aa). 6 residues coordinate [4Fe-4S] cluster: C15, C51, C85, C172, C176, and C179. One can recognise a Radical SAM core domain in the interval 158 to 390; sequence RPTPFQAYLR…LAVQDRISKE (233 aa). A TRAM domain is found at 393-464; it reads QKLIGDTVEV…SHTLIGRVKT (72 aa).

The protein belongs to the methylthiotransferase family. MiaB subfamily. Monomer. [4Fe-4S] cluster serves as cofactor.

The protein resides in the cytoplasm. It carries out the reaction N(6)-dimethylallyladenosine(37) in tRNA + (sulfur carrier)-SH + AH2 + 2 S-adenosyl-L-methionine = 2-methylsulfanyl-N(6)-dimethylallyladenosine(37) in tRNA + (sulfur carrier)-H + 5'-deoxyadenosine + L-methionine + A + S-adenosyl-L-homocysteine + 2 H(+). Catalyzes the methylthiolation of N6-(dimethylallyl)adenosine (i(6)A), leading to the formation of 2-methylthio-N6-(dimethylallyl)adenosine (ms(2)i(6)A) at position 37 in tRNAs that read codons beginning with uridine. The chain is tRNA-2-methylthio-N(6)-dimethylallyladenosine synthase from Rhodopirellula baltica (strain DSM 10527 / NCIMB 13988 / SH1).